The following is a 442-amino-acid chain: tRNA modification GTPase MnmE (442 aa).

Arg-21, Glu-79, and Lys-118 together coordinate (6S)-5-formyl-5,6,7,8-tetrahydrofolate. The TrmE-type G domain maps to 214–367 (GFKIAIIGKP…LKEELQNYLN (154 aa)). Asn-224 is a binding site for K(+). GTP-binding positions include 224 to 229 (NVGKSS), 243 to 249 (SDIAGTT), and 268 to 271 (DTAG). Mg(2+) is bound at residue Ser-228. Ser-243, Ile-245, and Thr-248 together coordinate K(+). Mg(2+) is bound at residue Thr-249. Lys-442 lines the (6S)-5-formyl-5,6,7,8-tetrahydrofolate pocket.

Belongs to the TRAFAC class TrmE-Era-EngA-EngB-Septin-like GTPase superfamily. TrmE GTPase family. Homodimer. Heterotetramer of two MnmE and two MnmG subunits. K(+) is required as a cofactor.

It is found in the cytoplasm. Exhibits a very high intrinsic GTPase hydrolysis rate. Involved in the addition of a carboxymethylaminomethyl (cmnm) group at the wobble position (U34) of certain tRNAs, forming tRNA-cmnm(5)s(2)U34. This Campylobacter jejuni subsp. doylei (strain ATCC BAA-1458 / RM4099 / 269.97) protein is tRNA modification GTPase MnmE.